The primary structure comprises 75 residues: Small ribosomal subunit protein bS18 (75 aa).

This sequence belongs to the bacterial ribosomal protein bS18 family. Part of the 30S ribosomal subunit. Forms a tight heterodimer with protein bS6.

Its function is as follows. Binds as a heterodimer with protein bS6 to the central domain of the 16S rRNA, where it helps stabilize the platform of the 30S subunit. The chain is Small ribosomal subunit protein bS18 from Photobacterium profundum (strain SS9).